Reading from the N-terminus, the 274-residue chain is Hydroxyacylglutathione hydrolase, cytoplasmic isozyme (274 aa).

Zn(2+)-binding residues include H59, H61, D63, H64, H121, and D144. Substrate contacts are provided by residues R153 and 188 to 190 (HEY). H188 serves as a coordination point for Zn(2+). Position 257 is a phosphoserine (S257). 268–271 (RAMK) contributes to the substrate binding site.

Belongs to the metallo-beta-lactamase superfamily. Glyoxalase II family. Zn(2+) is required as a cofactor.

The protein resides in the cytoplasm. It carries out the reaction an S-(2-hydroxyacyl)glutathione + H2O = a 2-hydroxy carboxylate + glutathione + H(+). The catalysed reaction is (R)-S-lactoylglutathione + H2O = (R)-lactate + glutathione + H(+). Its pathway is secondary metabolite metabolism; methylglyoxal degradation; (R)-lactate from methylglyoxal: step 2/2. Inhibited by various thiol compounds such as glutathione and coenzyme A. Functionally, thiolesterase that catalyzes the hydrolysis of S-D-lactoylglutathione to form glutathione and D-lactic acid. Involved in the metabolism of methylglyoxal, a toxic compound for yeast proliferation, by converting methylglyoxal to lactate via S-D-lactoylglutathione by sequential enzyme reactions catalyzed by glyoxalase I and glyoxalase II. This is Hydroxyacylglutathione hydrolase, cytoplasmic isozyme from Saccharomyces cerevisiae (strain ATCC 204508 / S288c) (Baker's yeast).